A 209-amino-acid polypeptide reads, in one-letter code: Probable phosphatidylglycerophosphate synthase (209 aa).

4 helical membrane passes run 32–52, 105–125, 147–167, and 171–191; these read ILTLLRLVMVPVFLLALFYGG, ALIGLSMLGDLPWWVTVLILT, WGGKLKTFVQAVAIGLFVLPL, and LHVAAVVVMAAAILLTVITGV.

The protein belongs to the CDP-alcohol phosphatidyltransferase class-I family.

It localises to the cell membrane. The enzyme catalyses a CDP-1,2-diacyl-sn-glycerol + sn-glycerol 3-phosphate = a 1,2-diacyl-sn-glycero-3-phospho-(1'-sn-glycero-3'-phosphate) + CMP + H(+). The protein operates within lipid metabolism; phospholipid metabolism. Its function is as follows. Probably catalyzes the synthesis of phosphatidylglycerophosphate by transferring a phosphatidyl group from CDP-diacylglycerol to glycerol 3-phosphate. This is Probable phosphatidylglycerophosphate synthase from Mycobacterium tuberculosis (strain CDC 1551 / Oshkosh).